Here is a 347-residue protein sequence, read N- to C-terminus: NADH-ubiquinone oxidoreductase chain 2 (347 aa).

Transmembrane regions (helical) follow at residues 1–21, 25–45, 59–79, 111–131, 149–169, 178–198, 201–221, 237–257, 276–296, and 326–346; these read MNPLVFTVIMSTVMLGTAIVA, HWLMAWIGFEMNMLAVIPILM, YFLTQATASMLLMLAVTMNLV, FHFWVPEVAQGISLPSGLILL, INLDLLMTLSILSIGIGGWGG, IMAYSSIAHMGWMTTILAYNP, TLLNLAIYILLTTTTFMMFML, MPLLTTAILLTMLSLGGLPPL, VILPTMMAVMALLNLYFYMRL, and LSPLIILSTLILPLSPMLALL.

It belongs to the complex I subunit 2 family. As to quaternary structure, core subunit of respiratory chain NADH dehydrogenase (Complex I) which is composed of 45 different subunits. Interacts with TMEM242.

It localises to the mitochondrion inner membrane. It catalyses the reaction a ubiquinone + NADH + 5 H(+)(in) = a ubiquinol + NAD(+) + 4 H(+)(out). In terms of biological role, core subunit of the mitochondrial membrane respiratory chain NADH dehydrogenase (Complex I) which catalyzes electron transfer from NADH through the respiratory chain, using ubiquinone as an electron acceptor. Essential for the catalytic activity and assembly of complex I. This chain is NADH-ubiquinone oxidoreductase chain 2, found in Pteropus pumilus (Little golden-mantled flying fox).